The chain runs to 199 residues: Chaperone protein TorD (199 aa).

Belongs to the TorD/DmsD family. TorD subfamily.

Its subcellular location is the cytoplasm. Its function is as follows. Involved in the biogenesis of TorA. Acts on TorA before the insertion of the molybdenum cofactor and, as a result, probably favors a conformation of the apoenzyme that is competent for acquiring the cofactor. This Escherichia coli O8 (strain IAI1) protein is Chaperone protein TorD.